The chain runs to 657 residues: Pyoverdine export ATP-binding/permease protein PvdT (657 aa).

One can recognise an ABC transporter domain in the interval 6-245 (IDLRNIRKSY…LSANAGALQA (240 aa)). 43–50 (GASGSGKS) is a binding site for ATP. 4 helical membrane passes run 285 to 305 (ALTLLGIIIGVASVVVMLAVG), 532 to 552 (LSLMLGAIAAISLLVGGIGVM), 590 to 610 (LSVVGGLAGIGVALIIGGILI), and 620 to 640 (LAAVLGAFACALVTGVIFGFM).

This sequence belongs to the ABC transporter superfamily. Macrolide exporter (TC 3.A.1.122) family. As to quaternary structure, part of the tripartite efflux system PvdRT-OpmQ, which is composed of an inner membrane component with both ATPase and permease domains, PvdT, a periplasmic membrane fusion protein, PvdR, and an outer membrane component, OpmQ.

Its subcellular location is the cell inner membrane. Functionally, part of the tripartite efflux system PvdRT-OpmQ required for the secretion into the extracellular milieu of the siderophore pyoverdine (PVD), which is involved in iron acquisition. This subunit binds PVD and drives its secretion by hydrolyzing ATP. The system is responsible for export of newly synthesized PVD after the final steps of biosynthesis have taken place in the periplasm. It is also responsible for recycling of PVD after internalization of ferri-PVD into the periplasm by the outer-membrane receptor FpvA and release of iron from PVD, thus making PVD available for new cycles of iron uptake. The sequence is that of Pyoverdine export ATP-binding/permease protein PvdT from Pseudomonas fluorescens (strain ATCC BAA-477 / NRRL B-23932 / Pf-5).